Consider the following 360-residue polypeptide: Phenylalanine--tRNA ligase alpha subunit (360 aa).

Glu-260 is a Mg(2+) binding site.

This sequence belongs to the class-II aminoacyl-tRNA synthetase family. Phe-tRNA synthetase alpha subunit type 1 subfamily. Tetramer of two alpha and two beta subunits. Mg(2+) is required as a cofactor.

The protein localises to the cytoplasm. The catalysed reaction is tRNA(Phe) + L-phenylalanine + ATP = L-phenylalanyl-tRNA(Phe) + AMP + diphosphate + H(+). The polypeptide is Phenylalanine--tRNA ligase alpha subunit (Rhizobium etli (strain CIAT 652)).